We begin with the raw amino-acid sequence, 417 residues long: Gamma-glutamyl phosphate reductase (417 aa).

This sequence belongs to the gamma-glutamyl phosphate reductase family.

It is found in the cytoplasm. The catalysed reaction is L-glutamate 5-semialdehyde + phosphate + NADP(+) = L-glutamyl 5-phosphate + NADPH + H(+). It functions in the pathway amino-acid biosynthesis; L-proline biosynthesis; L-glutamate 5-semialdehyde from L-glutamate: step 2/2. In terms of biological role, catalyzes the NADPH-dependent reduction of L-glutamate 5-phosphate into L-glutamate 5-semialdehyde and phosphate. The product spontaneously undergoes cyclization to form 1-pyrroline-5-carboxylate. The polypeptide is Gamma-glutamyl phosphate reductase (Streptococcus agalactiae serotype III (strain NEM316)).